The primary structure comprises 601 residues: MFVAKNLSPERESKRQKKEPEIMEPSFPLLSPNNCGHWYIRYGFCIVCKSTVDKTIEGRVFDGLHLSSEALALTKRLITKFSCLNMKKLHLVLDLDLTLIHSVRVPCLSEAEKYLIEEAGSTTREDLWKMKVRGDPISITIEHLVKLRPFLCEFLKEANEMFTMYVYTKGTRPYAEAILKLIDPKKLYFGHRVITRNESPHTKTLDMVLADERGVVIVDDTRKAWPNNKSNLVLIGRYNYFRSQSRVLKPHSEEKTDESENNGGLANVLKLLKGIHHKFFKVEEEVESQDVRLTMSVVENFSSEPKAKRRKIEPTINESSSSLSSSSSCGHWYICHGICIGCKSTVKKSQGRAFDYIFDGLQLSHEAVALTKCFTTKLSCLNEKKLHLVLDLDHTLLHTVMVPSLSQAEKYLIEEAGSATRDDLWKIKAVGDPMEFLTKLRPFLRDFLKEANEFFTMYVYTKGSRVYAKQVLELIDPKKLYFGDRVITKTESPHMKTLDFVLAEERGVVIVDDTRNVWPDHKSNLVDISKYSYFRLKGQDSMPYSEEKTDESESEGGLANVLKLLKEVHQRFFRVEEELESKDVRSLLQEIDFELNVESVE.

The tract at residues 1 to 20 (MFVAKNLSPERESKRQKKEP) is disordered. A compositionally biased stretch (basic and acidic residues) spans 8–20 (SPERESKRQKKEP). FCP1 homology domains follow at residues 84–259 (LNMK…TDES) and 381–553 (LNEK…DESE).

As to expression, expressed in roots, seedlings, hypocotyls, cotyledons, leaves, siliques and flowers.

It is found in the nucleus. It catalyses the reaction O-phospho-L-seryl-[protein] + H2O = L-seryl-[protein] + phosphate. The enzyme catalyses O-phospho-L-threonyl-[protein] + H2O = L-threonyl-[protein] + phosphate. Mediates the dephosphorylation of 'Ser-2' of the heptad repeats YSPTSPS in the C-terminal domain of the largest RNA polymerase II subunit (RPB1). This promotes the activity of RNA polymerase II. Positively regulates abscisic acid (ABA) and drought responses, including the regulation of specific genes expression. The protein is RNA polymerase II C-terminal domain phosphatase-like 5 of Arabidopsis thaliana (Mouse-ear cress).